We begin with the raw amino-acid sequence, 335 residues long: MAIPKVGINGFGRIGRIVLRNAILTGKIQVVAVNDPFIDLDYMAYMFKYDSTHGRFEGSVETKGGKLVIDGHSIDVHNERDPANIKWSASGAEYVIESTGVFTTKETASAHLKGGAKRVIISAPSKDAPMFVVGVNLEKFNPSEKVISNASCTTNCLAPLAKVINDTFGIEEGLMTTVHATTATQKTVDGPSKKDWRGGRGASANIIPSSTGAAKAVGKVIPALNGKLTGMAFRVPTPDVSVVDLTVKLAKPTNYEDIKAAIKAASEGPMKGVLGYTEDSVVSTDFCGDNHSSIFDASAGIQLSPQFVKLVSWYDNEWGYSHRVVDLVAYTASKD.

Residues 13–14, D35, and R80 contribute to the NAD(+) site; that span reads RI. Residues S125 and S151 each carry the phosphoserine modification. Residue 151 to 153 participates in D-glyceraldehyde 3-phosphate binding; the sequence is SCT. C152 functions as the Nucleophile in the catalytic mechanism. Phosphothreonine occurs at positions 153, 154, 182, and 184. D-glyceraldehyde 3-phosphate is bound at residue T182. A phosphoserine mark is found at S192, S203, and S209. T211 carries the post-translational modification Phosphothreonine. Residues 211–212 and R234 each bind D-glyceraldehyde 3-phosphate; that span reads TG. Residue T237 is modified to Phosphothreonine. S241 bears the Phosphoserine mark. N316 lines the NAD(+) pocket.

This sequence belongs to the glyceraldehyde-3-phosphate dehydrogenase family. As to quaternary structure, homotetramer.

The protein resides in the cytoplasm. The enzyme catalyses D-glyceraldehyde 3-phosphate + phosphate + NAD(+) = (2R)-3-phospho-glyceroyl phosphate + NADH + H(+). It functions in the pathway carbohydrate degradation; glycolysis; pyruvate from D-glyceraldehyde 3-phosphate: step 1/5. The polypeptide is Glyceraldehyde-3-phosphate dehydrogenase 2 (gpd3) (Schizosaccharomyces pombe (strain 972 / ATCC 24843) (Fission yeast)).